The following is a 27-amino-acid chain: Caerulein precursor fragment R7 (27 aa).

Expressed by the skin glands.

The protein resides in the secreted. Antimicrobial peptide. The sequence is that of Caerulein precursor fragment R7 from Xenopus ruwenzoriensis (Uganda clawed frog).